A 54-amino-acid chain; its full sequence is MPMIKSPHGEGGCVCAPPATDWTPPPLLPLLNRFDFRSTRPQTLLRRGGSNYGY.

In Escherichia coli (strain K12), this protein is Protein YmjE.